A 765-amino-acid chain; its full sequence is Lysyl oxidase homolog 2 (765 aa).

A signal peptide spans 1 to 19 (MLVSHVFLLTLSLSVPSLG). 4 SRCR domains span residues 49 to 150 (VRLA…VQCS), 179 to 293 (IRPI…VSCT), 317 to 416 (VRLR…VRCN), and 426 to 535 (VRLS…VSCV). 9 cysteine pairs are disulfide-bonded: cysteine 75-cysteine 139, cysteine 88-cysteine 149, cysteine 119-cysteine 129, cysteine 209-cysteine 282, cysteine 222-cysteine 292, cysteine 256-cysteine 266, cysteine 342-cysteine 405, cysteine 355-cysteine 415, and cysteine 386-cysteine 396. Asparagine 279 is a glycosylation site (N-linked (GlcNAc...) asparagine). The N-linked (GlcNAc...) asparagine glycan is linked to asparagine 446. Disulfide bonds link cysteine 455–cysteine 521, cysteine 468–cysteine 534, and cysteine 502–cysteine 512. The lysyl-oxidase like stretch occupies residues 539-742 (PDLVLNAALV…WMYNCHIGGS (204 aa)). Residues aspartate 540 and leucine 541 each contribute to the Ca(2+) site. 4 disulfides stabilise this stretch: cysteine 564/cysteine 616, cysteine 570/cysteine 686, cysteine 648/cysteine 664, and cysteine 654/cysteine 676. 3 residues coordinate Cu cation: histidine 617, histidine 619, and histidine 621. Asparagine 635 carries N-linked (GlcNAc...) asparagine glycosylation. Residues 644 to 680 (KASFCLEDSECEADIQKQYVCANFGEQGITVGCWDLY) constitute a cross-link (lysine tyrosylquinone (Lys-Tyr)). Tyrosine 680 bears the 2',4',5'-topaquinone mark. Positions 713, 715, 718, and 719 each coordinate Ca(2+). Cysteine 723 and cysteine 737 are oxidised to a cystine.

This sequence belongs to the lysyl oxidase family. Requires Cu cation as cofactor. Lysine tyrosylquinone residue serves as cofactor. The lysine tyrosylquinone cross-link (LTQ) is generated by condensation of the epsilon-amino group of a lysine with a topaquinone produced by oxidation of tyrosine.

It is found in the secreted. It localises to the extracellular space. The protein localises to the extracellular matrix. The protein resides in the basement membrane. Its subcellular location is the nucleus. It is found in the chromosome. It localises to the endoplasmic reticulum. It carries out the reaction L-lysyl-[protein] + O2 + H2O = (S)-2-amino-6-oxohexanoyl-[protein] + H2O2 + NH4(+). Its function is as follows. Mediates the post-translational oxidative deamination of lysine residues on target proteins leading to the formation of deaminated lysine (allysine). Acts as a transcription corepressor and specifically mediates deamination of trimethylated 'Lys-4' of histone H3 (H3K4me3), a specific tag for epigenetic transcriptional activation. Shows no activity against histone H3 when it is trimethylated on 'Lys-9' (H3K9me3) or 'Lys-27' (H3K27me3) or when 'Lys-4' is monomethylated (H3K4me1) or dimethylated (H3K4me2). Also mediates deamination of methylated TAF10, a member of the transcription factor IID (TFIID) complex, which induces release of TAF10 from promoters, leading to inhibition of TFIID-dependent transcription. LOXL2-mediated deamination of TAF10 results in transcriptional repression of genes required for embryonic stem cell pluripotency. Involved in epithelial to mesenchymal transition (EMT) and participates in repression of E-cadherin, probably by mediating deamination of histone H3. When secreted into the extracellular matrix, promotes cross-linking of extracellular matrix proteins by mediating oxidative deamination of peptidyl lysine residues in precursors to fibrous collagen and elastin. Acts as a regulator of sprouting angiogenesis, probably via collagen IV scaffolding. Acts as a regulator of chondrocyte differentiation, probably by regulating expression of factors that control chondrocyte differentiation. The chain is Lysyl oxidase homolog 2 (loxl2) from Xenopus laevis (African clawed frog).